The chain runs to 649 residues: ATP-dependent zinc metalloprotease FtsH (649 aa).

Over 1–18 the chain is Cytoplasmic; it reads MQCSYPLARQLERSSALN. A helical transmembrane segment spans residues 19–39; the sequence is NNLFQKAAIWLVIALVLFTVF. At 40–115 the chain is on the periplasmic side; sequence KQFDKPRAQD…VTGKADDEPN (76 aa). Residues 116 to 136 traverse the membrane as a helical segment; that stretch reads VLVQALYYLGPTLLIIVFWFY. The Cytoplasmic segment spans residues 137 to 649; the sequence is MMRQMQGGGK…PATARADETV (513 aa). 210-217 contacts ATP; that stretch reads GPPGTGKT. Position 432 (His432) interacts with Zn(2+). Glu433 is a catalytic residue. His436 and Asp508 together coordinate Zn(2+). The interval 606 to 649 is disordered; sequence IMAGRPPRPPRGAQGPNSGGNTPPGGSPVAPTNAPATARADETV. Low complexity predominate over residues 616 to 626; that stretch reads RGAQGPNSGGN.

This sequence in the central section; belongs to the AAA ATPase family. It in the C-terminal section; belongs to the peptidase M41 family. As to quaternary structure, homohexamer. Requires Zn(2+) as cofactor.

The protein resides in the cell inner membrane. Acts as a processive, ATP-dependent zinc metallopeptidase for both cytoplasmic and membrane proteins. Plays a role in the quality control of integral membrane proteins. The protein is ATP-dependent zinc metalloprotease FtsH of Cupriavidus metallidurans (strain ATCC 43123 / DSM 2839 / NBRC 102507 / CH34) (Ralstonia metallidurans).